We begin with the raw amino-acid sequence, 436 residues long: GTPase Obg (436 aa).

Positions 2-160 (SMFLDTAKIQ…RELLLELKVL (159 aa)) constitute an Obg domain. In terms of domain architecture, OBG-type G spans 161 to 338 (ADVGLVGFPS…LLDATAELLD (178 aa)). GTP is bound by residues 167–174 (GFPSVGKS), 192–196 (FTTIV), 214–217 (DLPG), 284–287 (NKMD), and 319–321 (SSL). Residues Ser174 and Thr194 each coordinate Mg(2+). Positions 358–436 (GFDEEAPAFE…IGKFEFEFVD (79 aa)) constitute an OCT domain.

The protein belongs to the TRAFAC class OBG-HflX-like GTPase superfamily. OBG GTPase family. As to quaternary structure, monomer. Mg(2+) is required as a cofactor.

The protein localises to the cytoplasm. In terms of biological role, an essential GTPase which binds GTP, GDP and possibly (p)ppGpp with moderate affinity, with high nucleotide exchange rates and a fairly low GTP hydrolysis rate. Plays a role in control of the cell cycle, stress response, ribosome biogenesis and in those bacteria that undergo differentiation, in morphogenesis control. This is GTPase Obg from Streptococcus sanguinis (strain SK36).